The primary structure comprises 238 residues: Octanoyltransferase (238 aa).

The 181-residue stretch at 40–220 folds into the BPL/LPL catalytic domain; the sequence is AGGSDALLLL…RVCDALDGRL (181 aa). Substrate contacts are provided by residues 78-85, 150-152, and 163-165; these read RGGKITWH, AIG, and GFA. Cys181 functions as the Acyl-thioester intermediate in the catalytic mechanism.

Belongs to the LipB family.

Its subcellular location is the cytoplasm. The enzyme catalyses octanoyl-[ACP] + L-lysyl-[protein] = N(6)-octanoyl-L-lysyl-[protein] + holo-[ACP] + H(+). The protein operates within protein modification; protein lipoylation via endogenous pathway; protein N(6)-(lipoyl)lysine from octanoyl-[acyl-carrier-protein]: step 1/2. Its function is as follows. Catalyzes the transfer of endogenously produced octanoic acid from octanoyl-acyl-carrier-protein onto the lipoyl domains of lipoate-dependent enzymes. Lipoyl-ACP can also act as a substrate although octanoyl-ACP is likely to be the physiological substrate. The sequence is that of Octanoyltransferase from Mycobacterium sp. (strain JLS).